Consider the following 464-residue polypeptide: GDNF family receptor alpha-2 (464 aa).

The signal sequence occupies residues 1–21 (MILANVFCLFFFLDETLRSLA). 11 cysteine pairs are disulfide-bonded: Cys40-Cys93, Cys95-Cys105, Cys161-Cys222, Cys168-Cys174, Cys185-Cys200, Cys195-Cys241, Cys224-Cys229, Cys251-Cys323, Cys258-Cys264, Cys275-Cys293, and Cys285-Cys347. Asn52 is a glycosylation site (N-linked (GlcNAc...) asparagine). Asn357 is a glycosylation site (N-linked (GlcNAc...) asparagine). The segment at 363-392 (VSPKGPSFQATQAPRVEKTPSLPDDLSDST) is disordered. Residues 381–392 (TPSLPDDLSDST) are compositionally biased toward low complexity. An N-linked (GlcNAc...) asparagine glycan is attached at Asn413. A lipid anchor (GPI-anchor amidated serine) is attached at Ser444. The propeptide at 445 to 464 (RARPSAALTVLSVLMLKLAL) is removed in mature form.

This sequence belongs to the GDNFR family. As to quaternary structure, interacts with NRTN ligand and RET: forms a 2:2:2 ternary complex composed of NRTN ligand, GFRA2 and RET receptor. Also forms a 4:4:4 tetrameric complex composed of 4 copies of NRTN ligand, GFRA2 and RET receptor, which prevents endocytosis of RET. Interacts with SORL1. In terms of tissue distribution, found in both brain and placenta.

The protein localises to the cell membrane. Its function is as follows. Receptor for neurturin (NRTN), a growth factor that supports the survival of sympathetic neurons. NRTN-binding leads to autophosphorylation and activation of the RET receptor. Also able to mediate GDNF signaling through the RET tyrosine kinase receptor. Participates in NRTN-induced 'Ser-727' phosphorylation of STAT3. This is GDNF family receptor alpha-2 (GFRA2) from Homo sapiens (Human).